Reading from the N-terminus, the 253-residue chain is Phosphoribosylaminoimidazole-succinocarboxamide synthase (253 aa).

This sequence belongs to the SAICAR synthetase family.

The catalysed reaction is 5-amino-1-(5-phospho-D-ribosyl)imidazole-4-carboxylate + L-aspartate + ATP = (2S)-2-[5-amino-1-(5-phospho-beta-D-ribosyl)imidazole-4-carboxamido]succinate + ADP + phosphate + 2 H(+). The protein operates within purine metabolism; IMP biosynthesis via de novo pathway; 5-amino-1-(5-phospho-D-ribosyl)imidazole-4-carboxamide from 5-amino-1-(5-phospho-D-ribosyl)imidazole-4-carboxylate: step 1/2. The sequence is that of Phosphoribosylaminoimidazole-succinocarboxamide synthase from Dinoroseobacter shibae (strain DSM 16493 / NCIMB 14021 / DFL 12).